A 239-amino-acid polypeptide reads, in one-letter code: Ras-like protein B (239 aa).

Residues Gly-13–Ala-18, Val-29–Thr-35, Ala-59–Gly-60, Asn-139–Asp-142, and Ser-169–Lys-171 contribute to the GTP site. Positions Tyr-32–Tyr-40 match the Effector region motif. The tract at residues Arg-191 to Arg-227 is disordered. Basic and acidic residues predominate over residues Ala-199–Asp-226.

This sequence belongs to the small GTPase superfamily. Ras family. As to quaternary structure, interacts with mpkA.

It catalyses the reaction GTP + H2O = GDP + phosphate + H(+). Ras-like protein involved in the activation of Ras protein signal transduction. Ras proteins bind GDP/GTP and possess intrinsic GTPase activity. Plays a role in hyphal morphology and conidiophore development. Required for full virulence. The chain is Ras-like protein B from Aspergillus fumigatus (strain ATCC MYA-4609 / CBS 101355 / FGSC A1100 / Af293) (Neosartorya fumigata).